Reading from the N-terminus, the 229-residue chain is Large ribosomal subunit protein uL1 (229 aa).

This sequence belongs to the universal ribosomal protein uL1 family. As to quaternary structure, part of the 50S ribosomal subunit.

Functionally, binds directly to 23S rRNA. The L1 stalk is quite mobile in the ribosome, and is involved in E site tRNA release. Protein L1 is also a translational repressor protein, it controls the translation of the L11 operon by binding to its mRNA. The sequence is that of Large ribosomal subunit protein uL1 from Clostridium beijerinckii (strain ATCC 51743 / NCIMB 8052) (Clostridium acetobutylicum).